We begin with the raw amino-acid sequence, 217 residues long: MSQSLLDRFGTPLERVHLAIDRLRQGRGVLLVDDENRENEGDLIFPAETITPAQMAMMIRECSGIVCLCLTEDKLKQLELPQMVSDNTSANQTAFTLSIEARQGVTTGVSAADRVTTIRTAVADDCRPDDLARPGHVFPLRARPGGVLTRRGHTEGTVDLMRMAGYKPAGVLCELTNEDGTMARLPEIITFAERHYLSVVSIEDLALALESHMEKSA.

D-ribulose 5-phosphate is bound by residues 37 to 38, aspartate 42, 150 to 154, and glutamate 174; these read RE and RRGHT. Mg(2+) is bound at residue glutamate 38. Histidine 153 provides a ligand contact to Mg(2+).

Belongs to the DHBP synthase family. Homodimer. Requires Mg(2+) as cofactor. Mn(2+) is required as a cofactor.

The enzyme catalyses D-ribulose 5-phosphate = (2S)-2-hydroxy-3-oxobutyl phosphate + formate + H(+). The protein operates within cofactor biosynthesis; riboflavin biosynthesis; 2-hydroxy-3-oxobutyl phosphate from D-ribulose 5-phosphate: step 1/1. In terms of biological role, catalyzes the conversion of D-ribulose 5-phosphate to formate and 3,4-dihydroxy-2-butanone 4-phosphate. This Syntrophotalea carbinolica (strain DSM 2380 / NBRC 103641 / GraBd1) (Pelobacter carbinolicus) protein is 3,4-dihydroxy-2-butanone 4-phosphate synthase.